A 229-amino-acid polypeptide reads, in one-letter code: Ribonuclease 3 (229 aa).

The RNase III domain maps to 5 to 127 (LDRLERKLGY…LIGAIYQDAD (123 aa)). Glu-40 lines the Mg(2+) pocket. Asp-44 is a catalytic residue. Residues Asp-113 and Glu-116 each coordinate Mg(2+). Residue Glu-116 is part of the active site. One can recognise a DRBM domain in the interval 154-224 (DPKTRLQEFL…AAAALIALGV (71 aa)).

The protein belongs to the ribonuclease III family. As to quaternary structure, homodimer. Mg(2+) serves as cofactor.

It is found in the cytoplasm. The enzyme catalyses Endonucleolytic cleavage to 5'-phosphomonoester.. In terms of biological role, digests double-stranded RNA. Involved in the processing of primary rRNA transcript to yield the immediate precursors to the large and small rRNAs (23S and 16S). Processes some mRNAs, and tRNAs when they are encoded in the rRNA operon. Processes pre-crRNA and tracrRNA of type II CRISPR loci if present in the organism. This is Ribonuclease 3 from Pseudomonas entomophila (strain L48).